Consider the following 335-residue polypeptide: Mitochondrial amidoxime reducing component 2 (335 aa).

The N-terminal 35 residues, methionine 1–leucine 35, are a transit peptide targeting the mitochondrion. Residues lysine 59, lysine 138, and lysine 144 each participate in a glycyl lysine isopeptide (Lys-Gly) (interchain with G-Cter in ubiquitin) cross-link. Residue lysine 156 is modified to N6-acetyllysine; alternate. A Glycyl lysine isopeptide (Lys-Gly) (interchain with G-Cter in ubiquitin); alternate cross-link involves residue lysine 156. Residues lysine 173, lysine 187, lysine 287, and lysine 294 each participate in a glycyl lysine isopeptide (Lys-Gly) (interchain with G-Cter in ubiquitin) cross-link. Residues glycine 188 to methionine 334 form the MOSC domain.

Component of a complex composed of cytochrome b5, NADH-cytochrome b5 reductase (CYB5R3) and MTARC2. It depends on Mo-molybdopterin as a cofactor. Post-translationally, ubiquitinated by PRKN during mitophagy, leading to its degradation and enhancement of mitophagy. Deubiquitinated by USP30.

It localises to the mitochondrion outer membrane. The protein resides in the peroxisome. The catalysed reaction is N(omega)-hydroxy-L-arginine + 2 Fe(II)-[cytochrome b5] + 2 H(+) = L-arginine + 2 Fe(III)-[cytochrome b5] + H2O. Functionally, catalyzes the reduction of N-oxygenated molecules, acting as a counterpart of cytochrome P450 and flavin-containing monooxygenases in metabolic cycles. As a component of prodrug-converting system, reduces a multitude of N-hydroxylated prodrugs particularly amidoximes, leading to increased drug bioavailability. May be involved in mitochondrial N(omega)-hydroxy-L-arginine (NOHA) reduction, regulating endogenous nitric oxide levels and biosynthesis. Postulated to cleave the N-OH bond of N-hydroxylated substrates in concert with electron transfer from NADH to cytochrome b5 reductase then to cytochrome b5, the ultimate electron donor that primes the active site for substrate reduction. This Macaca fascicularis (Crab-eating macaque) protein is Mitochondrial amidoxime reducing component 2 (MTARC2).